The chain runs to 316 residues: MIKLGIIMDPISSIKIKKDTSFSIMLEAQKRNYFLYYIEMKDIYYEVGEVYANSYLISVKYDEKKWYSFKKKYTINLKELDVILMRKDPPFDIEFLYITYILEHIENFGVLIINKPKSLRDYNEKISTLSFKYSPKTLISCSKKAIYSFQEKFGDIILKPINKMGGDSVFYVKKNDPNVSVIIDQLTNYGNSFCLIQEYIKEILNGDRRIIMINGSPLPYCLVRIPNDKEIRGNLAAGASFDILPLRKIDYEISNNISSFLKDKGLIFVGLDIIGNYLTEINITSPTGINEIESVYKVSISGILLDSIEKLLNIKH.

Residues Asn-123–Glu-309 form the ATP-grasp domain. ATP is bound at residue Phe-149–Gly-206. Mg(2+) is bound by residues Glu-280 and Asn-282.

Belongs to the prokaryotic GSH synthase family. Mg(2+) is required as a cofactor. Mn(2+) serves as cofactor.

The enzyme catalyses gamma-L-glutamyl-L-cysteine + glycine + ATP = glutathione + ADP + phosphate + H(+). It functions in the pathway sulfur metabolism; glutathione biosynthesis; glutathione from L-cysteine and L-glutamate: step 2/2. The chain is Glutathione synthetase from Wigglesworthia glossinidia brevipalpis.